The following is a 145-amino-acid chain: Maximins 3/H3 type 1 (145 aa).

Residues 1 to 18 form the signal peptide; sequence MNFKYIVAVSFLIASAYA. Propeptides lie at residues 19 to 43 and 74 to 124; these read RSVQ…LREI and RIAE…KEKR. I144 carries the isoleucine amide modification.

Belongs to the bombinin family. As to expression, expressed by the skin glands.

Its subcellular location is the secreted. Its function is as follows. Maximin-3 shows antibacterial activity against both Gram-positive and Gram-negative bacteria. It also shows antimicrobial activity against the fungus C.albicans, but not against A.flavus nor P.uticale. It has little hemolytic activity. It possess a significant cytotoxicity against tumor cell lines. It possess a significant anti-HIV activity. It shows high spermicidal activity. Functionally, maximin-H3 shows antibacterial activity against both Gram-positive and Gram-negative bacteria. It also shows antimicrobial activity against the fungus C.albicans. Shows strong hemolytic activity. This chain is Maximins 3/H3 type 1, found in Bombina maxima (Giant fire-bellied toad).